A 655-amino-acid polypeptide reads, in one-letter code: Tumor necrosis factor receptor superfamily member 21 (655 aa).

A signal peptide spans 1 to 41 (MGTSASSITALASCSRIAGQVGATMVAGSLLLLGFLSTITA). The Extracellular segment spans residues 42-349 (QPEQKTLSLT…PHKHFDINEH (308 aa)). 4 TNFR-Cys repeats span residues 50 to 88 (LTGT…LRVC), 90 to 131 (SCPS…DREC), 133 to 167 (CPPG…EDVR), and 170 to 211 (QCAR…DNVC). 9 cysteine pairs are disulfide-bonded: Cys67–Cys80, Cys70–Cys88, Cys91–Cys106, Cys109–Cys123, Cys113–Cys131, Cys133–Cys144, Cys150–Cys168, Cys171–Cys186, and Cys192–Cys211. An N-linked (GlcNAc...) asparagine glycan is attached at Asn82. Disordered stretches follow at residues 214 to 306 (HLSS…GPHH) and 318 to 338 (EATG…HPRQ). A compositionally biased stretch (low complexity) spans 216-225 (SSSSTTPSSP). Polar residues-rich tracts occupy residues 241 to 262 (VPSS…TASV) and 276 to 302 (PDNT…THQQ). N-linked (GlcNAc...) asparagine glycans are attached at residues Asn252, Asn278, and Asn289. Residues 350-370 (LPWMIVLFLLLVLVLIVVCSI) traverse the membrane as a helical segment. Cys368 is lipidated: S-palmitoyl cysteine. Residues 371-655 (RKSSRTLKKG…SVYSHLPDLL (285 aa)) are Cytoplasmic-facing. The 84-residue stretch at 415–498 (GIDILKLVAA…DVVEKIRGLM (84 aa)) folds into the Death domain.

In terms of assembly, associates with TRADD. Interacts with NGFR. Interacts with CASP8. Post-translationally, oxidized in response to reactive oxygen species (ROS), leading to endocytosis. In terms of tissue distribution, detected in brain (at protein level). Detected in corpus callosum oligodendrocytes. Detected in embryonic and adult brain.

The protein localises to the cell membrane. Promotes apoptosis, possibly via a pathway that involves the activation of NF-kappa-B. Can also promote apoptosis mediated by BAX and by the release of cytochrome c from the mitochondria into the cytoplasm. Trophic-factor deprivation triggers the cleavage of surface APP by beta-secretase to release sAPP-beta which is further cleaved to release an N-terminal fragment of APP (N-APP). Negatively regulates oligodendrocyte survival, maturation and myelination. Plays a role in signaling cascades triggered by stimulation of T-cell receptors, in the adaptive immune response and in the regulation of T-cell differentiation and proliferation. Negatively regulates T-cell responses and the release of cytokines such as IL4, IL5, IL10, IL13 and IFNG by Th2 cells. Negatively regulates the production of IgG, IgM and IgM in response to antigens. May inhibit the activation of JNK in response to T-cell stimulation. Also acts as a regulator of pyroptosis: recruits CASP8 in response to reactive oxygen species (ROS) and subsequent oxidation, leading to activation of GSDMC. The polypeptide is Tumor necrosis factor receptor superfamily member 21 (Tnfrsf21) (Rattus norvegicus (Rat)).